Reading from the N-terminus, the 512-residue chain is Maturase K (512 aa).

This sequence belongs to the intron maturase 2 family. MatK subfamily.

It is found in the plastid. The protein localises to the chloroplast. Functionally, usually encoded in the trnK tRNA gene intron. Probably assists in splicing its own and other chloroplast group II introns. The polypeptide is Maturase K (Acer platanoides (Norway maple)).